The sequence spans 559 residues: Potassium-transporting ATPase potassium-binding subunit (559 aa).

Helical transmembrane passes span 5–25 (GFLL…PLGS), 27–47 (LARL…RILW), 63–83 (LLAL…LLFW), 132–152 (GLTV…FALI), 170–190 (LVRI…LFFI), 253–273 (LAQM…FGEA), 283–303 (LLWA…WAEV), 327–347 (FGVL…CGAV), 356–376 (ALGG…FGGV), 379–399 (GLYG…LMIG), 416–436 (MTAL…ALAM), 484–504 (LLAF…MAIA), and 524–544 (GALF…LTFI).

The protein belongs to the KdpA family. In terms of assembly, the system is composed of three essential subunits: KdpA, KdpB and KdpC.

The protein localises to the cell inner membrane. Its function is as follows. Part of the high-affinity ATP-driven potassium transport (or Kdp) system, which catalyzes the hydrolysis of ATP coupled with the electrogenic transport of potassium into the cytoplasm. This subunit binds the periplasmic potassium ions and delivers the ions to the membrane domain of KdpB through an intramembrane tunnel. This Salmonella typhi protein is Potassium-transporting ATPase potassium-binding subunit.